A 598-amino-acid chain; its full sequence is Arginine--tRNA ligase (598 aa).

The 'HIGH' region signature appears at 131-141 (ANPTGPMHVGH). Residues 288–308 (KLPPPKSKKGQPPAQPQPDEE) are disordered.

The protein belongs to the class-I aminoacyl-tRNA synthetase family. Monomer.

The protein resides in the cytoplasm. The catalysed reaction is tRNA(Arg) + L-arginine + ATP = L-arginyl-tRNA(Arg) + AMP + diphosphate. This chain is Arginine--tRNA ligase, found in Anaeromyxobacter sp. (strain K).